The sequence spans 63 residues: Putative conjugal transfer lipoprotein XF_a0011.1 (63 aa).

The first 15 residues, 1-15, serve as a signal peptide directing secretion; it reads MRYTFGIVTVYLLAG. A lipid anchor (N-palmitoyl cysteine) is attached at cysteine 16. Cysteine 16 carries the S-diacylglycerol cysteine lipid modification.

To B.suis ORF12 in VirB region.

Its subcellular location is the cell inner membrane. This Xylella fastidiosa (strain 9a5c) protein is Putative conjugal transfer lipoprotein XF_a0011.1.